We begin with the raw amino-acid sequence, 68 residues long: MAMTNEEKVLAIREKLNIVNQGLLDPEKYKNANEEELTDIYDFVQSRERLSPSEVTAIADALGQLRHE.

The protein belongs to the UPF0435 family.

The polypeptide is UPF0435 protein SAOUHSC_02093 (Staphylococcus aureus (strain NCTC 8325 / PS 47)).